A 226-amino-acid chain; its full sequence is UPF0758 protein Daro_3142 (226 aa).

An MPN domain is found at 103–226; sequence SFTSPGKVRD…PLSFAERGLL (124 aa). Zn(2+)-binding residues include His-174, His-176, and Asp-187. Positions 174-187 match the JAMM motif motif; it reads HNHPSGIAEPSRAD.

This sequence belongs to the UPF0758 family.

This Dechloromonas aromatica (strain RCB) protein is UPF0758 protein Daro_3142.